Consider the following 424-residue polypeptide: Enolase (424 aa).

(2R)-2-phosphoglycerate is bound at residue Q165. E207 acts as the Proton donor in catalysis. The Mg(2+) site is built by D244, E283, and D310. The (2R)-2-phosphoglycerate site is built by K335, R364, S365, and K386. The active-site Proton acceptor is the K335.

It belongs to the enolase family. Mg(2+) is required as a cofactor.

The protein resides in the cytoplasm. The protein localises to the secreted. It is found in the cell surface. It carries out the reaction (2R)-2-phosphoglycerate = phosphoenolpyruvate + H2O. Its pathway is carbohydrate degradation; glycolysis; pyruvate from D-glyceraldehyde 3-phosphate: step 4/5. Its function is as follows. Catalyzes the reversible conversion of 2-phosphoglycerate (2-PG) into phosphoenolpyruvate (PEP). It is essential for the degradation of carbohydrates via glycolysis. The chain is Enolase from Chlamydia abortus (strain DSM 27085 / S26/3) (Chlamydophila abortus).